The chain runs to 143 residues: Transcriptional regulator MraZ (143 aa).

2 SpoVT-AbrB domains span residues 5–47 and 76–119; these read EYLH…PLDE and ATEC…SQAL.

Belongs to the MraZ family. In terms of assembly, forms oligomers.

Its subcellular location is the cytoplasm. The protein resides in the nucleoid. The protein is Transcriptional regulator MraZ of Desulfitobacterium hafniense (strain Y51).